The chain runs to 363 residues: MTKRILMLEDGNYFIGDAIGSEKETIGEVVFNTGMTGYQETITDPSYYGQIITFTYPLVGNYGVNRDDFESINPAVKGVVVREAAEFPSNWRNQITLDEFLKEKGIPGIAGIDTRKLTKLIRKEGTLKGILAAETANKEELLHHLRSVRLPVDQVHEVSSAKAFASPGDGKRVVLVDYGVKSSILRELNKRNCYVTVVPYNTTAEEILAMHPDGVMLSNGPGDPKDVPEALEMIRGIQGKLPLFGICLGHQLFALANGADTFKLKFGHRGANHPVKELATGRVDFTAQNHGYAVEKDSLIGTDLKVTHIELNDETVEGLAHKEYPAYTVQYHPEANPGPSDVNYLFDEFMEMMNGKEEGELHA.

A CPSase region spans residues 1-172 (MTKRILMLED…AFASPGDGKR (172 aa)). Serine 46, glycine 220, and glycine 222 together coordinate L-glutamine. The 188-residue stretch at 172 to 359 (RVVLVDYGVK…MEMMNGKEEG (188 aa)) folds into the Glutamine amidotransferase type-1 domain. Cysteine 247 (nucleophile) is an active-site residue. 5 residues coordinate L-glutamine: leucine 248, glutamine 251, asparagine 289, glycine 291, and tyrosine 292. Active-site residues include histidine 332 and glutamate 334.

Belongs to the CarA family. Composed of two chains; the small (or glutamine) chain promotes the hydrolysis of glutamine to ammonia, which is used by the large (or ammonia) chain to synthesize carbamoyl phosphate. Tetramer of heterodimers (alpha,beta)4.

The catalysed reaction is hydrogencarbonate + L-glutamine + 2 ATP + H2O = carbamoyl phosphate + L-glutamate + 2 ADP + phosphate + 2 H(+). The enzyme catalyses L-glutamine + H2O = L-glutamate + NH4(+). It participates in amino-acid biosynthesis; L-arginine biosynthesis; carbamoyl phosphate from bicarbonate: step 1/1. It functions in the pathway pyrimidine metabolism; UMP biosynthesis via de novo pathway; (S)-dihydroorotate from bicarbonate: step 1/3. Its function is as follows. Small subunit of the glutamine-dependent carbamoyl phosphate synthetase (CPSase). CPSase catalyzes the formation of carbamoyl phosphate from the ammonia moiety of glutamine, carbonate, and phosphate donated by ATP, constituting the first step of 2 biosynthetic pathways, one leading to arginine and/or urea and the other to pyrimidine nucleotides. The small subunit (glutamine amidotransferase) binds and cleaves glutamine to supply the large subunit with the substrate ammonia. The polypeptide is Carbamoyl phosphate synthase small chain (Listeria monocytogenes serotype 4b (strain F2365)).